Consider the following 417-residue polypeptide: MAEIRNYTINFGPQHPSAHGVLRLVLELDGEVVERADPHIGLLHRGTEKLAETRTWVQSVPYMDRLDYVSMMCNEHAYCMAIERLLGVEVPLRAQYIRVMFDEITRILNHLLNIGTHALDIGAMTMVLYTFREREDLMDAYEAVSGARMHAAYYRPGGVYRDLPDRMPQYQPNKFKNANVVKDLNAARQGSLLDFLDDFTQRFPRYCDEYETLLTDNRIWKQRTVGIGVVTPEQALAWGFSGPMIRGSGIAWDLRKKQPYEVYDKVDFDIPVGKNGDCYDRYLCRMEEMRQSNRIIRQCIDWLRKNPGPVITDNHKVAPPSREQMKSNMEELIHHFKLFTEGMHVPKGEAYAAVEHPKGEFGVYAVSDGANKPYRLKLRAPGFAHLAAMDEISRGHMIADVVAIIGTMDVVFGEIDR.

This sequence belongs to the complex I 49 kDa subunit family. NDH-1 is composed of 14 different subunits. Subunits NuoB, C, D, E, F, and G constitute the peripheral sector of the complex.

Its subcellular location is the cell inner membrane. The catalysed reaction is a quinone + NADH + 5 H(+)(in) = a quinol + NAD(+) + 4 H(+)(out). In terms of biological role, NDH-1 shuttles electrons from NADH, via FMN and iron-sulfur (Fe-S) centers, to quinones in the respiratory chain. The immediate electron acceptor for the enzyme in this species is believed to be ubiquinone. Couples the redox reaction to proton translocation (for every two electrons transferred, four hydrogen ions are translocated across the cytoplasmic membrane), and thus conserves the redox energy in a proton gradient. The chain is NADH-quinone oxidoreductase subunit D from Azoarcus sp. (strain BH72).